The sequence spans 207 residues: Small ribosomal subunit protein uS4 (207 aa).

Positions 31–53 (KAKFDSKPGQHGRTSGTRTSDFG) are disordered. Polar residues predominate over residues 42–52 (GRTSGTRTSDF). Positions 97–158 (SRLDNVVYRM…KSKKQTRVTE (62 aa)) constitute an S4 RNA-binding domain.

It belongs to the universal ribosomal protein uS4 family. As to quaternary structure, part of the 30S ribosomal subunit. Contacts protein S5. The interaction surface between S4 and S5 is involved in control of translational fidelity.

One of the primary rRNA binding proteins, it binds directly to 16S rRNA where it nucleates assembly of the body of the 30S subunit. In terms of biological role, with S5 and S12 plays an important role in translational accuracy. This Polaromonas sp. (strain JS666 / ATCC BAA-500) protein is Small ribosomal subunit protein uS4.